A 780-amino-acid polypeptide reads, in one-letter code: Subtilisin-like protease SBT1.3 (780 aa).

Residues 1-25 form the signal peptide; sequence MANKNPLQKPFLFIILSINLIFLQA. A propeptide spans 26 to 120 (activation peptide); it reads ETTTQISTKK…VIPETRYELH (95 aa). Positions 36 to 120 constitute an Inhibitor I9 domain; the sequence is TYVIHMDKSA…VIPETRYELH (85 aa). The Peptidase S8 domain occupies 116-628; it reads RYELHTTRSP…AGHIDPLRAT (513 aa). D154 serves as the catalytic Charge relay system. A glycan (N-linked (GlcNAc...) asparagine) is linked at N165. The active-site Charge relay system is the H227. Residues 384 to 477 form the PA domain; that stretch reads KQYPLVYLGR…GEKEGKLIKQ (94 aa). Residue N394 is glycosylated (N-linked (GlcNAc...) asparagine). The active-site Charge relay system is S560. Residues N663 and N731 are each glycosylated (N-linked (GlcNAc...) asparagine).

The protein belongs to the peptidase S8 family.

It is found in the secreted. The sequence is that of Subtilisin-like protease SBT1.3 from Arabidopsis thaliana (Mouse-ear cress).